Here is a 586-residue protein sequence, read N- to C-terminus: CTP synthase 2 (586 aa).

The Glutamine amidotransferase type-1 domain maps to 300 to 554 (SIALVGKYTK…LAATGNLNAY (255 aa)). Active-site for GATase activity residues include cysteine 399, histidine 526, and glutamate 528. The segment at 563–586 (SSDRYSDASDDSFSEPRIAELEIS) is disordered. 3 positions are modified to phosphoserine: serine 568, serine 571, and serine 574.

The protein belongs to the CTP synthase family.

The catalysed reaction is UTP + L-glutamine + ATP + H2O = CTP + L-glutamate + ADP + phosphate + 2 H(+). Its pathway is pyrimidine metabolism; CTP biosynthesis via de novo pathway; CTP from UDP: step 2/2. In terms of biological role, catalyzes the ATP-dependent amination of UTP to CTP with either L-glutamine or ammonia as the source of nitrogen. Constitutes the rate-limiting enzyme in the synthesis of cytosine nucleotides. In Homo sapiens (Human), this protein is CTP synthase 2 (CTPS2).